A 309-amino-acid polypeptide reads, in one-letter code: MILTVTMNPSIDISYPLDELKIDTVNRVVDVTKTAGGKGLNVTRVLSEFGDSVLATGLVGGKLGEFLVEHIDNQVKKDFFSIKGETRNCIAILHGDNQTEVLEKGPEVLEQEGQEFLEHFKKLLESVEVVAISGSLPAGLPVDYYASLVELANQAGKHVVLDCSGAALQAVLESPHKPTVIKPNNEELSQLLGREVSEDLDELKEVLQEPLFAGIEWIIVSLGANGTFAKHGDTFYKVDIPRIQVVNPVGSGDSTVAGISSGLLHKESDAELLIKANVLGMLNAQEKMTGHVNMANYQALYDQLIVKEV.

This sequence belongs to the carbohydrate kinase PfkB family. LacC subfamily.

The catalysed reaction is D-tagatofuranose 6-phosphate + ATP = D-tagatofuranose 1,6-bisphosphate + ADP + H(+). It functions in the pathway carbohydrate metabolism; D-tagatose 6-phosphate degradation; D-glyceraldehyde 3-phosphate and glycerone phosphate from D-tagatose 6-phosphate: step 1/2. The polypeptide is Tagatose-6-phosphate kinase (Streptococcus pneumoniae serotype 4 (strain ATCC BAA-334 / TIGR4)).